Consider the following 347-residue polypeptide: Phenylalanine--tRNA ligase alpha subunit (347 aa).

Glutamate 261 is a binding site for Mg(2+).

This sequence belongs to the class-II aminoacyl-tRNA synthetase family. Phe-tRNA synthetase alpha subunit type 1 subfamily. In terms of assembly, tetramer of two alpha and two beta subunits. Requires Mg(2+) as cofactor.

It is found in the cytoplasm. The catalysed reaction is tRNA(Phe) + L-phenylalanine + ATP = L-phenylalanyl-tRNA(Phe) + AMP + diphosphate + H(+). The chain is Phenylalanine--tRNA ligase alpha subunit from Streptococcus pyogenes serotype M18 (strain MGAS8232).